We begin with the raw amino-acid sequence, 197 residues long: Ribosome maturation factor RimM (197 aa).

A PRC barrel domain is found at Asp92 to Leu164. The interval Ile167–Ala197 is disordered. Residues Ser176–Ala186 are compositionally biased toward low complexity. A compositionally biased stretch (basic and acidic residues) spans Glu187–Ala197.

It belongs to the RimM family. As to quaternary structure, binds ribosomal protein uS19.

The protein localises to the cytoplasm. Its function is as follows. An accessory protein needed during the final step in the assembly of 30S ribosomal subunit, possibly for assembly of the head region. Essential for efficient processing of 16S rRNA. May be needed both before and after RbfA during the maturation of 16S rRNA. It has affinity for free ribosomal 30S subunits but not for 70S ribosomes. The chain is Ribosome maturation factor RimM from Arthrobacter sp. (strain FB24).